Consider the following 294-residue polypeptide: MAITAQMVKELREKTGAGMMDCKKALTETNGDMEKAIDWLREKGIAKAAKKADRIAAEGMTYIATEGNAAVILEVNSETDFVAKNEAFQTLVKELAAHLLKQKPATLDEALGQTMSSGSTVQDYINEAVAKIGEKITLRRFAVVNKADDETFGAYLHMGGRIGVLTLLAGSATEEVAKDVAMHIAALHPKYVSRDEVPQEEIAREREVLKQQALNEGKPENIVEKMVEGRLKKFYEDVCLLEQAFVKNPDVTVRQYVESSGATVKQFIRYEVGEGLEKRQDNFAEEVMSQVRKQ.

Residues 79 to 82 (TDFV) are involved in Mg(2+) ion dislocation from EF-Tu.

The protein belongs to the EF-Ts family.

It localises to the cytoplasm. In terms of biological role, associates with the EF-Tu.GDP complex and induces the exchange of GDP to GTP. It remains bound to the aminoacyl-tRNA.EF-Tu.GTP complex up to the GTP hydrolysis stage on the ribosome. The protein is Elongation factor Ts of Geobacillus thermodenitrificans (strain NG80-2).